A 339-amino-acid chain; its full sequence is MLDPRAQTLLKTLIERYIAEGQPVGSRTLSRYSGLELSPATIRNVMSDLEDLGLVISPHTSAGRIPTPRGYRLFVDTMLTVESAADEEAVMRTVKTTLQAGEPQKIVAAAASVLSNLSQFAGVVLTPRRSHVFKQIEFMRLSDKRILLIIVTPEGDVQNRIMATQRDFSPSQLVEASNYINAHFAGLSFDDVRRRLREEIDELRGDMTTLMHAAVTASTDEADTGETVLISGERNLLEVADLSSDMARLRKLFDVFDQKTSLLQLLDVSSHAAGVQIFIGGESNLVPIEEMSVVTAPYEVNGKIVGTLGVIGPTRMAYNRVIPIVDITARLLSLTLSQQ.

Belongs to the HrcA family.

In terms of biological role, negative regulator of class I heat shock genes (grpE-dnaK-dnaJ and groELS operons). Prevents heat-shock induction of these operons. The protein is Heat-inducible transcription repressor HrcA of Paraburkholderia xenovorans (strain LB400).